The sequence spans 926 residues: BTB/POZ domain-containing protein KCTD19 (926 aa).

In terms of domain architecture, BTB 1 spans 18–72 (NVGGWHFSVPRSKLSQFPDSLLWKEASALTSSESQRLFIDRDGSTFRHVHYYLYT). The residue at position 270 (Ser-270) is a Phosphoserine. Positions 398-485 (IKVYVGSHWY…YHIPSLSEAL (88 aa)) constitute a BTB 2 domain. The interval 673 to 751 (GSEAASQPST…PAPEQPLPEA (79 aa)) is disordered. Over residues 730-742 (DWSKQRTKERESP) the composition is skewed to basic and acidic residues.

As to quaternary structure, identified in a complex with ZNF541, HDAC1 and HSPA2. Identified in a complex with ZNF541 and HDAC1. Identified in a complex with HDAC1, HDAC2, DNTTIP1 and ZNF541.

The protein resides in the nucleus. Its function is as follows. Transcription regulator which is essential for male fertility and for the completion of meiotic prophase in spermatocytes. Regulates progression of the pachytene stage of meiotic prophase and promotes the transcriptional activation activity ZNF541. Required for the organization of chromosomes during metaphase I. The protein is BTB/POZ domain-containing protein KCTD19 (KCTD19) of Homo sapiens (Human).